Consider the following 202-residue polypeptide: MAENNNNNGDNMNNDNHQQPPSYSQLPPMASSNPQLRNYWIEQMETVSDFKNRQLPLARIKKIMKADPDVHMVSAEAPIIFAKACEMFIVDLTMRSWLKAEENKRHTLQKSDISNAVASSFTYDFLLDVVPKDESIATADPGFVAMPHPDGGGVPQYYYPPGVVMGTPMVGSGMYAPSQAWPAAAGDGEDDAEDNGGNGGGN.

A compositionally biased stretch (low complexity) spans 1–16; sequence MAENNNNNGDNMNNDN. 2 disordered regions span residues 1–29 and 180–202; these read MAENNNNNGDNMNNDNHQQPPSYSQLPPM and AWPAAAGDGEDDAEDNGGNGGGN. Residues 17–29 are compositionally biased toward polar residues; sequence HQQPPSYSQLPPM.

It belongs to the NFYC/HAP5 subunit family. As to quaternary structure, heterotrimeric transcription factor composed of three components, NF-YA, NF-YB and NF-YC. NF-YB and NF-YC must interact and dimerize for NF-YA association and DNA binding. As to expression, expressed in flowers and siliques.

The protein localises to the nucleus. Its function is as follows. Stimulates the transcription of various genes by recognizing and binding to a CCAAT motif in promoters. The polypeptide is Nuclear transcription factor Y subunit C-6 (NFYC6) (Arabidopsis thaliana (Mouse-ear cress)).